A 152-amino-acid polypeptide reads, in one-letter code: MLTLGNLSPQEGSTKQRKRLGRGPGSGHGKTAGRGHKGFKSRSGSGIKPGFEGGQMPLQRRLPKRGFTNIFKKEFSLVALSQLDKFEAGVVVSPAELVEAGMVKKGTLIKILANGEITKAVTVKVDKISSQAKAQIEAAGGTVVLTEVTAAE.

A compositionally biased stretch (polar residues) spans 1 to 13; it reads MLTLGNLSPQEGS. The disordered stretch occupies residues 1–62; sequence MLTLGNLSPQ…GGQMPLQRRL (62 aa). Basic residues predominate over residues 31–40; it reads TAGRGHKGFK.

It belongs to the universal ribosomal protein uL15 family. Part of the 50S ribosomal subunit.

In terms of biological role, binds to the 23S rRNA. The polypeptide is Large ribosomal subunit protein uL15 (Desulfotalea psychrophila (strain LSv54 / DSM 12343)).